The chain runs to 407 residues: MIGFEIFLAIGMFTAIVLGLVAIILVARAKLVSSGDVTIQINGEHSLTVPAGGKLLQTLAANNVFLSSACGGGGTCAQCKCVVVDGGGEMLPTEESHFTRRQAKEGWRLSCQTPVKQDMQIRVPEEVFGVKKWECTVESNPNVATFIKELTLRLPDGESVDFRAGGYVQLECPPHVVEYKDFDIQPEYRGDWDKFNMWRYVSKVDETVIRAYSMANYPEEKGVVKFNIRIASPPPGSDLPPGQMSSWVFNLKPGDKVTVYGPFGEFFAKDTEAEMVFIGGGAGMAPMRSHIFDQLRRLRSTRKISFWYGARSLREAFYTEEYDQLQAENPNFQWHLALSDPQPEDNWTGLTGFIHNVLFENYLKDHPAPEDCEFYMCGPPMMNAAVIKMLTDLGVERENILLDDFGG.

A helical membrane pass occupies residues 6 to 26 (IFLAIGMFTAIVLGLVAIILV). Residues 35–127 (GDVTIQINGE…DMQIRVPEEV (93 aa)) form the 2Fe-2S ferredoxin-type domain. [2Fe-2S] cluster is bound by residues cysteine 70, cysteine 76, cysteine 79, and cysteine 111. One can recognise an FAD-binding FR-type domain in the interval 130–269 (VKKWECTVES…YGPFGEFFAK (140 aa)).

The protein belongs to the NqrF family. In terms of assembly, composed of six subunits; NqrA, NqrB, NqrC, NqrD, NqrE and NqrF. It depends on [2Fe-2S] cluster as a cofactor. FAD serves as cofactor.

It localises to the cell inner membrane. The catalysed reaction is a ubiquinone + n Na(+)(in) + NADH + H(+) = a ubiquinol + n Na(+)(out) + NAD(+). Functionally, NQR complex catalyzes the reduction of ubiquinone-1 to ubiquinol by two successive reactions, coupled with the transport of Na(+) ions from the cytoplasm to the periplasm. The first step is catalyzed by NqrF, which accepts electrons from NADH and reduces ubiquinone-1 to ubisemiquinone by a one-electron transfer pathway. The sequence is that of Na(+)-translocating NADH-quinone reductase subunit F from Pseudomonas paraeruginosa (strain DSM 24068 / PA7) (Pseudomonas aeruginosa (strain PA7)).